Consider the following 237-residue polypeptide: Flagellar L-ring protein (237 aa).

An N-terminal signal peptide occupies residues 1–24; sequence MNRLSVPRFSVLIASLCGITLLSG. Cys-25 is lipidated: N-palmitoyl cysteine. Cys-25 carries S-diacylglycerol cysteine lipidation.

Belongs to the FlgH family. In terms of assembly, the basal body constitutes a major portion of the flagellar organelle and consists of four rings (L,P,S, and M) mounted on a central rod.

It is found in the cell outer membrane. The protein resides in the bacterial flagellum basal body. Assembles around the rod to form the L-ring and probably protects the motor/basal body from shearing forces during rotation. The sequence is that of Flagellar L-ring protein from Pseudomonas syringae pv. syringae (strain B728a).